A 500-amino-acid polypeptide reads, in one-letter code: 4-aminobutyrate aminotransferase, mitochondrial (500 aa).

The transit peptide at 1–28 (MAFLLITRRLACSSQKNLHLFIPGSRYI) directs the protein to the mitochondrion. A [2Fe-2S] cluster-binding site is contributed by cysteine 163. A pyridoxal 5'-phosphate-binding site is contributed by 164–165 (GS). Cysteine 166 serves as a coordination point for [2Fe-2S] cluster. Arginine 220 contributes to the substrate binding site. An N6-succinyllysine modification is found at lysine 231. Lysine 252 carries the post-translational modification N6-acetyllysine; alternate. Position 252 is an N6-succinyllysine; alternate (lysine 252). An N6-acetyllysine mark is found at lysine 279 and lysine 318. An N6-(pyridoxal phosphate)lysine modification is found at lysine 357. A pyridoxal 5'-phosphate-binding site is contributed by threonine 381. Lysine 413 carries the N6-acetyllysine; alternate modification. The residue at position 413 (lysine 413) is an N6-succinyllysine; alternate. N6-acetyllysine occurs at positions 452 and 470.

This sequence belongs to the class-III pyridoxal-phosphate-dependent aminotransferase family. As to quaternary structure, homodimer; disulfide-linked. Pyridoxal 5'-phosphate is required as a cofactor. Requires [2Fe-2S] cluster as cofactor.

It localises to the mitochondrion matrix. The catalysed reaction is 4-aminobutanoate + 2-oxoglutarate = succinate semialdehyde + L-glutamate. It carries out the reaction (S)-3-amino-2-methylpropanoate + 2-oxoglutarate = 2-methyl-3-oxopropanoate + L-glutamate. Functionally, catalyzes the conversion of gamma-aminobutyrate and L-beta-aminoisobutyrate to succinate semialdehyde and methylmalonate semialdehyde, respectively. Can also convert delta-aminovalerate and beta-alanine. This chain is 4-aminobutyrate aminotransferase, mitochondrial, found in Mus musculus (Mouse).